The sequence spans 791 residues: Linear element protein rec10 (791 aa).

2 disordered regions span residues 462-523 (NSVP…AKSN) and 644-672 (LLDG…TLIS). The short motif at 485–492 (QRRKDGKF) is the Nuclear localization signal element. A compositionally biased stretch (basic residues) spans 493 to 503 (AKSTKRKKQKS). Polar residues predominate over residues 644 to 657 (LLDGTCSSPPNNEC).

As to quaternary structure, component of linear elements (LinEs), which are similar to synaptonemal complexes, at least composed of rec27, rec25, rec10 and mug20. Interacts with rec25; the interaction is direct. Interacts with hop1 (via N-terminus); the interaction is direct. Interacts with rec15 (via C-terminus); the interaction is direct.

The protein localises to the nucleus. Its subcellular location is the chromosome. Its function is as follows. Organizes linear element components on chromosomes and is thus required for meiotic DNA recombination. This chain is Linear element protein rec10, found in Schizosaccharomyces pombe (strain 972 / ATCC 24843) (Fission yeast).